The primary structure comprises 449 residues: UDP-N-acetylmuramoylalanine--D-glutamate ligase (449 aa).

118 to 124 (GTNGKTT) lines the ATP pocket.

It belongs to the MurCDEF family.

It is found in the cytoplasm. The catalysed reaction is UDP-N-acetyl-alpha-D-muramoyl-L-alanine + D-glutamate + ATP = UDP-N-acetyl-alpha-D-muramoyl-L-alanyl-D-glutamate + ADP + phosphate + H(+). It functions in the pathway cell wall biogenesis; peptidoglycan biosynthesis. Cell wall formation. Catalyzes the addition of glutamate to the nucleotide precursor UDP-N-acetylmuramoyl-L-alanine (UMA). This Staphylococcus carnosus (strain TM300) protein is UDP-N-acetylmuramoylalanine--D-glutamate ligase.